A 244-amino-acid chain; its full sequence is MKIYTYHTPERVPADWQPDCAIAVDVLRATTTIATALAAGAEAVQVFSDLTELEQVSQQWPAAKRIRVGERGGKKVAGFDMGNSPAECLPERVRGCRLFMSTTNGTRSLERIQASPLVLAAALVNRAAVAEFVQKHQPETVWIVGSGWEGSYSLEDTVCAGALIHYLWGQQDAPLETLAGNDETIAATALYRYYQDDLLTLFHHSSHGQRLLNLGNEADLKYCAQVDILAIVPWQVSPKLLTKA.

The protein belongs to the ComB family. Mg(2+) serves as cofactor.

It catalyses the reaction (2R)-O-phospho-3-sulfolactate + H2O = (2R)-3-sulfolactate + phosphate. The chain is Probable 2-phosphosulfolactate phosphatase from Thermosynechococcus vestitus (strain NIES-2133 / IAM M-273 / BP-1).